Here is a 132-residue protein sequence, read N- to C-terminus: NLP effector protein 15 (132 aa).

The short motif at 1 to 9 (MYSWYFPKD) is the Conserved undecapeptide motif I element. A Hepta-peptide GHRHDWE motif II motif is present at residues 16-22 (GHRHDWE).

This sequence belongs to the Necrosis inducing protein (NPP1) family.

It is found in the secreted. In terms of biological role, secreted effector that contributes moderately to virulence during infection by P.capsici. Causes only small yellow areas at 3 days after inoculation of host C.annuum leaves; these areas expand somewhat and became necrotic at 7 days after inoculation. Leads only to chlorotic areas, without necrosis at 7 days after non-host N.benthamiana leaves infection. The sequence is that of NLP effector protein 15 from Phytophthora capsici.